Consider the following 341-residue polypeptide: S-adenosylmethionine:tRNA ribosyltransferase-isomerase (341 aa).

Belongs to the QueA family. Monomer.

Its subcellular location is the cytoplasm. It catalyses the reaction 7-aminomethyl-7-carbaguanosine(34) in tRNA + S-adenosyl-L-methionine = epoxyqueuosine(34) in tRNA + adenine + L-methionine + 2 H(+). It functions in the pathway tRNA modification; tRNA-queuosine biosynthesis. Transfers and isomerizes the ribose moiety from AdoMet to the 7-aminomethyl group of 7-deazaguanine (preQ1-tRNA) to give epoxyqueuosine (oQ-tRNA). This Clostridium botulinum (strain Alaska E43 / Type E3) protein is S-adenosylmethionine:tRNA ribosyltransferase-isomerase.